Reading from the N-terminus, the 570-residue chain is Protein misato homolog 1 (570 aa).

Serine 495 bears the Phosphoserine mark.

Belongs to the misato family. Present in all cell lines tested (at protein level). Widely expressed.

Its subcellular location is the mitochondrion outer membrane. It is found in the cytoplasm. Involved in the regulation of mitochondrial distribution and morphology. Required for mitochondrial fusion and mitochondrial network formation. The chain is Protein misato homolog 1 (MSTO1) from Homo sapiens (Human).